Here is a 457-residue protein sequence, read N- to C-terminus: Glutamate--tRNA ligase 1 (457 aa).

Residues 9 to 19 (PSPTGYIHIGN) carry the 'HIGH' region motif. Positions 250-254 (GLSKR) match the 'KMSKS' region motif. Lys-253 lines the ATP pocket.

Belongs to the class-I aminoacyl-tRNA synthetase family. Glutamate--tRNA ligase type 1 subfamily. In terms of assembly, monomer.

The protein resides in the cytoplasm. It carries out the reaction tRNA(Glu) + L-glutamate + ATP = L-glutamyl-tRNA(Glu) + AMP + diphosphate. Functionally, catalyzes the attachment of glutamate to tRNA(Glu) in a two-step reaction: glutamate is first activated by ATP to form Glu-AMP and then transferred to the acceptor end of tRNA(Glu). This Brucella ovis (strain ATCC 25840 / 63/290 / NCTC 10512) protein is Glutamate--tRNA ligase 1.